Here is a 76-residue protein sequence, read N- to C-terminus: Putative snRNP Sm-like protein (76 aa).

Residues 4 to 76 (RPLDVIHKSL…VLAISPTEEG (73 aa)) form the Sm domain.

The protein belongs to the snRNP Sm proteins family.

The protein is Putative snRNP Sm-like protein of Pyrococcus furiosus (strain ATCC 43587 / DSM 3638 / JCM 8422 / Vc1).